A 127-amino-acid chain; its full sequence is EF-hand calcium-binding domain-containing protein 10 (127 aa).

The 36-residue stretch at 63–98 (MDNSNIVAMFEMMDSSGRGTISFVQYKEALKTLGLC) folds into the EF-hand domain.

In Homo sapiens (Human), this protein is EF-hand calcium-binding domain-containing protein 10 (EFCAB10).